Consider the following 448-residue polypeptide: Exodeoxyribonuclease 7 large subunit (448 aa).

The protein belongs to the XseA family. Heterooligomer composed of large and small subunits.

It localises to the cytoplasm. It catalyses the reaction Exonucleolytic cleavage in either 5'- to 3'- or 3'- to 5'-direction to yield nucleoside 5'-phosphates.. Functionally, bidirectionally degrades single-stranded DNA into large acid-insoluble oligonucleotides, which are then degraded further into small acid-soluble oligonucleotides. This Alcanivorax borkumensis (strain ATCC 700651 / DSM 11573 / NCIMB 13689 / SK2) protein is Exodeoxyribonuclease 7 large subunit.